The following is a 223-amino-acid chain: Urease accessory protein UreF (223 aa).

It belongs to the UreF family. As to quaternary structure, ureD, UreF and UreG form a complex that acts as a GTP-hydrolysis-dependent molecular chaperone, activating the urease apoprotein by helping to assemble the nickel containing metallocenter of UreC. The UreE protein probably delivers the nickel.

It localises to the cytoplasm. In terms of biological role, required for maturation of urease via the functional incorporation of the urease nickel metallocenter. The polypeptide is Urease accessory protein UreF (Agrobacterium fabrum (strain C58 / ATCC 33970) (Agrobacterium tumefaciens (strain C58))).